The following is a 567-amino-acid chain: Protein phosphatase 1 regulatory inhibitor subunit 16B (567 aa).

The stretch at 15–55 forms a coiled coil; sequence EKVPTLERLRAAQKRRAQQLKKWAQYEQDLQHRKRKHERKR. Phosphoserine is present on S69. 4 ANK repeats span residues 100 to 129, 133 to 162, 228 to 257, and 261 to 290; these read DGLT…NVNA, ELWT…DLLA, QGAT…RVDV, and DGWE…SLSA. Phosphoserine is present on residues S333, S337, and S350. The segment at 378-403 is disordered; the sequence is RTSTYNGDIRETRTDQENKDPNPRLE. The span at 385-403 shows a compositional bias: basic and acidic residues; it reads DIRETRTDQENKDPNPRLE. Phosphoserine is present on S476. The segment covering 504–515 has biased composition (polar residues); that stretch reads SSMARTGESSSE. The interval 504 to 525 is disordered; that stretch reads SSMARTGESSSEGKAPLIGGRT. One copy of the ANK 5 repeat lies at 530–559; that stretch reads SNGTSVYYTVTSGDPPLLKFKAPIEEMEEK. Residue C563 is the site of S-palmitoyl cysteine attachment. C564 carries the cysteine methyl ester modification. C564 carries S-farnesyl cysteine lipidation. Positions 565-567 are cleaved as a propeptide — removed in mature form; the sequence is RIS.

In terms of assembly, interacts with PPP1CA, PPP1CB and MSN. Interacts (via its fourth ankyrin repeat) with the mature dimeric form of RPSA/LAMR1. Interacts with EEF1A1. Interacts with PTEN. Interacts with ECE1. Phosphorylated by PKA and, after PKA priming, by GSK3B. Phosphorylation by GSK3B reduces its association with PP1C and enhances PP1C activity. Dephosphorylation by its associated PP1C results in enhanced association with PP1C, but reduced PP1C activity.

The protein localises to the cell membrane. Its subcellular location is the nucleus. The protein resides in the cell projection. Functionally, regulator of protein phosphatase 1 (PP1) that acts as a positive regulator of pulmonary endothelial cell (EC) barrier function. Involved in the regulation of the PI3K/AKT signaling pathway, angiogenesis and endothelial cell proliferation. Regulates angiogenesis and endothelial cell proliferation through the control of ECE1 dephosphorylation, trafficking and activity. Protects the endothelial barrier from lipopolysaccharide (LPS)-induced vascular leakage. Involved in the regulation of endothelial cell filopodia extension. May be a downstream target for TGF-beta1 signaling cascade in endothelial cells. Involved in PKA-mediated moesin dephosphorylation which is important in EC barrier protection against thrombin stimulation. Promotes the interaction of PPP1CA with RPSA/LAMR1 and in turn facilitates the dephosphorylation of RPSA/LAMR1. Involved in the dephosphorylation of EEF1A1. The chain is Protein phosphatase 1 regulatory inhibitor subunit 16B (PPP1R16B) from Homo sapiens (Human).